The following is a 94-amino-acid chain: Integration host factor subunit beta (94 aa).

Belongs to the bacterial histone-like protein family. In terms of assembly, heterodimer of an alpha and a beta chain.

Its function is as follows. This protein is one of the two subunits of integration host factor, a specific DNA-binding protein that functions in genetic recombination as well as in transcriptional and translational control. This chain is Integration host factor subunit beta, found in Pseudomonas paraeruginosa (strain DSM 24068 / PA7) (Pseudomonas aeruginosa (strain PA7)).